The following is a 321-amino-acid chain: CPX chromosomal region candidate gene 1 protein homolog (321 aa).

The interval 1–83 (MSSPTKEGSD…TEIQKDQREE (83 aa)) is disordered. 2 stretches are compositionally biased toward polar residues: residues 21–32 (NEPSNDCTTDIE) and 44–60 (VETN…TSQE).

This chain is CPX chromosomal region candidate gene 1 protein homolog (CPXCR1), found in Macaca fascicularis (Crab-eating macaque).